Here is a 310-residue protein sequence, read N- to C-terminus: Proline iminopeptidase (310 aa).

One can recognise an AB hydrolase-1 domain in the interval 33–290 (PVIFLHGGPG…RVVQAGHRAF (258 aa)). Residue serine 107 is the Nucleophile of the active site. Aspartate 260 is a catalytic residue. The active-site Proton donor is histidine 287.

The protein belongs to the peptidase S33 family.

The protein resides in the cytoplasm. It carries out the reaction Release of N-terminal proline from a peptide.. Functionally, specifically catalyzes the removal of N-terminal proline residues from peptides. The polypeptide is Proline iminopeptidase (pip) (Neisseria meningitidis serogroup B (strain ATCC BAA-335 / MC58)).